The following is a 310-amino-acid chain: Upstream stimulatory factor 1 (310 aa).

Residues 1–17 are compositionally biased toward polar residues; the sequence is MKGQQKTAETEEGTVQI. Disordered stretches follow at residues 1–26 and 171–209; these read MKGQ…ATGE and QGGS…EVER. The span at 194 to 209 shows a compositional bias: basic and acidic residues; the sequence is TTRDEKRRAQHNEVER. In terms of domain architecture, bHLH spans 199–254; it reads KRRAQHNEVERRRRDKINNWIVQLSKIIPDCSMESTKSGQSKGGILSKACDYIQEL. The tract at residues 271-292 is leucine-zipper; it reads LQLDNDVLRQQVEDLKNKNLLL. A Glycyl lysine isopeptide (Lys-Gly) (interchain with G-Cter in SUMO2) cross-link involves residue Lys-306.

As to quaternary structure, efficient DNA binding requires dimerization with another bHLH protein. Binds DNA as a homodimer or a heterodimer (USF1/USF2).

It localises to the nucleus. In terms of biological role, transcription factor that binds to a symmetrical DNA sequence (E-boxes) (5'-CACGTG-3') that is found in a variety of viral and cellular promoters. Regulates the expression of the surfactant protein-A (SP-A) gene. The chain is Upstream stimulatory factor 1 (USF1) from Oryctolagus cuniculus (Rabbit).